The following is a 332-amino-acid chain: tRNA-dihydrouridine synthase B (332 aa).

FMN contacts are provided by residues 16–18 (PMA) and Q70. C100 (proton donor) is an active-site residue. Residues K139, 200 to 202 (NGD), and 224 to 225 (GR) each bind FMN.

The protein belongs to the Dus family. DusB subfamily. Requires FMN as cofactor.

The enzyme catalyses a 5,6-dihydrouridine in tRNA + NAD(+) = a uridine in tRNA + NADH + H(+). The catalysed reaction is a 5,6-dihydrouridine in tRNA + NADP(+) = a uridine in tRNA + NADPH + H(+). Functionally, catalyzes the synthesis of 5,6-dihydrouridine (D), a modified base found in the D-loop of most tRNAs, via the reduction of the C5-C6 double bond in target uridines. The chain is tRNA-dihydrouridine synthase B from Pasteurella multocida (strain Pm70).